Reading from the N-terminus, the 199-residue chain is NAD(P)H dehydrogenase (quinone) (199 aa).

The Flavodoxin-like domain occupies 4–190; sequence VLVLYYSAYG…AGARYQGQVI (187 aa). FMN contacts are provided by residues 10-15 and 78-80; these read SAYGHI and TRF. Tyr12 serves as a coordination point for NAD(+). Substrate is bound at residue Trp98. Residues 113-119 and His134 each bind FMN; that span reads STATQHG.

This sequence belongs to the WrbA family. FMN serves as cofactor.

It carries out the reaction a quinone + NADH + H(+) = a quinol + NAD(+). It catalyses the reaction a quinone + NADPH + H(+) = a quinol + NADP(+). The polypeptide is NAD(P)H dehydrogenase (quinone) (Rhodopseudomonas palustris (strain BisA53)).